A 325-amino-acid polypeptide reads, in one-letter code: Hydroxymethylglutaryl-CoA lyase, mitochondrial (325 aa).

The N-terminal 27 residues, 1-27 (MATVKKVLPRRLVGLATLRAVSTSSVG), are a transit peptide targeting the mitochondrion. One can recognise a Pyruvate carboxyltransferase domain in the interval 33–300 (VKIVEVGPRD…HTGVNLQKLL (268 aa)). Arginine 41 serves as a coordination point for substrate. Residue aspartate 42 participates in a divalent metal cation binding. At lysine 48 the chain carries N6-acetyllysine; alternate. An N6-succinyllysine; alternate modification is found at lysine 48. Residue lysine 111 is modified to N6-acetyllysine. N6-acetyllysine; alternate occurs at positions 137 and 179. N6-succinyllysine; alternate is present on residues lysine 137 and lysine 179. The a divalent metal cation site is built by histidine 233 and histidine 235. Cysteine 266 is a catalytic residue. Asparagine 275 provides a ligand contact to a divalent metal cation. Residues 323 to 325 (CKL) carry the Microbody targeting signal motif. N6-acetyllysine is present on lysine 324.

The protein belongs to the HMG-CoA lyase family. In terms of assembly, homodimer; disulfide-linked. Can also form homotetramers.

The protein localises to the mitochondrion matrix. It is found in the peroxisome. The enzyme catalyses (3S)-3-hydroxy-3-methylglutaryl-CoA = acetoacetate + acetyl-CoA. Its pathway is metabolic intermediate metabolism; (S)-3-hydroxy-3-methylglutaryl-CoA degradation; acetoacetate from (S)-3-hydroxy-3-methylglutaryl-CoA: step 1/1. In terms of biological role, mitochondrial 3-hydroxy-3-methylglutaryl-CoA lyase that catalyzes a cation-dependent cleavage of (S)-3-hydroxy-3-methylglutaryl-CoA into acetyl-CoA and acetoacetate, a key step in ketogenesis. Terminal step in leucine catabolism. Ketone bodies (beta-hydroxybutyrate, acetoacetate and acetone) are essential as an alternative source of energy to glucose, as lipid precursors and as regulators of metabolism. The sequence is that of Hydroxymethylglutaryl-CoA lyase, mitochondrial (HMGCL) from Bos taurus (Bovine).